Reading from the N-terminus, the 574-residue chain is uncharacterized protein (574 aa).

Residues 297–327 (STASKSKKRRKDEVSGAQRNSSPLPQDAVSS) are disordered. Positions 313 to 327 (AQRNSSPLPQDAVSS) are enriched in polar residues.

This is an uncharacterized protein from Macaca fascicularis (Crab-eating macaque).